The primary structure comprises 86 residues: Small ribosomal subunit protein uS17 (86 aa).

It belongs to the universal ribosomal protein uS17 family. As to quaternary structure, part of the 30S ribosomal subunit.

One of the primary rRNA binding proteins, it binds specifically to the 5'-end of 16S ribosomal RNA. This chain is Small ribosomal subunit protein uS17, found in Methylococcus capsulatus (strain ATCC 33009 / NCIMB 11132 / Bath).